A 422-amino-acid polypeptide reads, in one-letter code: Histone deacetylase B (422 aa).

A substrate-binding site is contributed by Asp102. His144 (proton acceptor) is an active-site residue. Residue Gly152 coordinates substrate. Asp179, His181, and Asp268 together coordinate a divalent metal cation. A substrate-binding site is contributed by Tyr307. Positions 399 to 422 (IDFDRDEDSKENMDKRKKKHNDFS) are disordered. The span at 413-422 (KRKKKHNDFS) shows a compositional bias: basic residues.

The protein belongs to the histone deacetylase family. HD type 1 subfamily.

The protein resides in the nucleus. Its subcellular location is the cytoplasm. The enzyme catalyses N(6)-acetyl-L-lysyl-[histone] + H2O = L-lysyl-[histone] + acetate. Its activity is inhibited by trichostatin A (TSA), a well known histone deacetylase inhibitor. Cytosolic activity is refractory to inhibition by TSA, while the nuclear activity is inhibited completely. Its function is as follows. Responsible for the deacetylation of lysine residues on the N-terminal part of the core histones (H2A, H2B, H3 and H4). Histone deacetylation plays an important role in transcriptional regulation, cell cycle progression and developmental events. Histone deacetylases act via the formation of large multiprotein complexes. May play a role in the regulation of the timing of gene expression during the development and in the definition aspects of the phenotype that mediate social behavior in genetically heterogeneous groups. This chain is Histone deacetylase B (hdaB), found in Dictyostelium discoideum (Social amoeba).